The following is a 160-amino-acid chain: Major pollen allergen Bet v 1-F/I (160 aa).

4 residues coordinate brassinolide: Lys55, Tyr82, Tyr84, and Asn101.

The protein belongs to the BetVI family.

It localises to the cytoplasm. May be a general steroid carrier protein. In Betula pendula (European white birch), this protein is Major pollen allergen Bet v 1-F/I (BETV1F).